An 81-amino-acid chain; its full sequence is MRPVSPLQLLLVLSLAPQPVLGSPKQYFLKYILEPPPCRSEPGACNMFCTQQEECPEPLQCCSAYCGIVCTSNQAPVLGLS.

A signal peptide spans 1–22 (MRPVSPLQLLLVLSLAPQPVLG). One can recognise a WAP domain in the interval 31–74 (YILEPPPCRSEPGACNMFCTQQEECPEPLQCCSAYCGIVCTSNQ). Disulfide bonds link Cys38–Cys62, Cys45–Cys66, Cys49–Cys61, and Cys55–Cys70.

It is found in the secreted. Its function is as follows. Putative acid-stable proteinase inhibitor. This Mus musculus (Mouse) protein is WAP four-disulfide core domain protein 13 (Wfdc13).